A 382-amino-acid polypeptide reads, in one-letter code: uncharacterized protein (382 aa).

Transmembrane regions (helical) follow at residues 14 to 34 (GLLLLTLAIAVLNTLVPLWLA), 45 to 65 (VVSSSYFTGNLVGTLLTGYVI), 79 to 99 (FIFAAGCAGLGLMIGFWSWLA), 102 to 122 (FVAGIGCAMIWVVVESALMCS), 131 to 151 (LLAAYMMVYYVGTFLGQLLVS), 157 to 177 (LMSVLPWVTGLTLAGILPLLF), 204 to 224 (LGVNGCIISGIVLGSLYGLMP), 235 to 255 (ASIGFWMAVLVSAGILGQWPI), 270 to 290 (VQVFVVILGSIAMLSQAAMAP), 291 to 311 (ALFILGAAGFTLYPVAMAWAC), 325 to 345 (ALLLSYTVGSLLGPSFTAMLM), and 348 to 368 (FSDNLLFIMIASVSFIYLLML).

This sequence belongs to the major facilitator superfamily. YcaD (TC 2.A.1.26) family.

It localises to the cell inner membrane. This is an uncharacterized protein from Escherichia coli O45:K1 (strain S88 / ExPEC).